A 37-amino-acid polypeptide reads, in one-letter code: MKVLASVKRICRNCKIIKRKGVVRVICIEPRHKQRQG.

The protein belongs to the bacterial ribosomal protein bL36 family.

In Janthinobacterium sp. (strain Marseille) (Minibacterium massiliensis), this protein is Large ribosomal subunit protein bL36.